Consider the following 195-residue polypeptide: Recombination protein RecR (195 aa).

A C4-type zinc finger spans residues 54–69 (CTICGSYTEDEICSIC). Positions 77 to 172 (ATICVVGFPQ…NITRLASGLP (96 aa)) constitute a Toprim domain.

This sequence belongs to the RecR family.

May play a role in DNA repair. It seems to be involved in an RecBC-independent recombinational process of DNA repair. It may act with RecF and RecO. The polypeptide is Recombination protein RecR (Treponema denticola (strain ATCC 35405 / DSM 14222 / CIP 103919 / JCM 8153 / KCTC 15104)).